The following is a 209-amino-acid chain: Redox-sensing transcriptional repressor Rex (209 aa).

The H-T-H motif DNA-binding region spans leucine 16–phenylalanine 55. An NAD(+)-binding site is contributed by glycine 90–glycine 95.

It belongs to the transcriptional regulatory Rex family. In terms of assembly, homodimer.

The protein resides in the cytoplasm. Its function is as follows. Modulates transcription in response to changes in cellular NADH/NAD(+) redox state. The chain is Redox-sensing transcriptional repressor Rex from Bacillus anthracis (strain A0248).